The primary structure comprises 247 residues: PF03932 family protein CutC (247 aa).

The segment covering 205 to 222 (KSTRPSLMESNSSAQMGS) has biased composition (polar residues). The disordered stretch occupies residues 205–226 (KSTRPSLMESNSSAQMGSNDVD).

Belongs to the CutC family.

The protein resides in the cytoplasm. The chain is PF03932 family protein CutC from Vibrio atlanticus (strain LGP32) (Vibrio splendidus (strain Mel32)).